Consider the following 200-residue polypeptide: Octanoyltransferase (200 aa).

A BPL/LPL catalytic domain is found at 27 to 200 (GAEDDQLWLV…WAELFSARWR (174 aa)). Substrate contacts are provided by residues 66-73 (RGGQITYH), 134-136 (SLG), and 147-149 (GIA). Cysteine 165 serves as the catalytic Acyl-thioester intermediate.

This sequence belongs to the LipB family.

It is found in the cytoplasm. It catalyses the reaction octanoyl-[ACP] + L-lysyl-[protein] = N(6)-octanoyl-L-lysyl-[protein] + holo-[ACP] + H(+). It participates in protein modification; protein lipoylation via endogenous pathway; protein N(6)-(lipoyl)lysine from octanoyl-[acyl-carrier-protein]: step 1/2. In terms of biological role, catalyzes the transfer of endogenously produced octanoic acid from octanoyl-acyl-carrier-protein onto the lipoyl domains of lipoate-dependent enzymes. Lipoyl-ACP can also act as a substrate although octanoyl-ACP is likely to be the physiological substrate. The chain is Octanoyltransferase from Dichelobacter nodosus (strain VCS1703A).